A 292-amino-acid chain; its full sequence is NAD kinase (292 aa).

The active-site Proton acceptor is Asp-73. NAD(+) is bound by residues 73–74 (DG), 147–148 (NE), His-158, Arg-175, Asp-177, 188–193 (TAYSLS), and Gln-247.

Belongs to the NAD kinase family. It depends on a divalent metal cation as a cofactor.

The protein localises to the cytoplasm. It catalyses the reaction NAD(+) + ATP = ADP + NADP(+) + H(+). Functionally, involved in the regulation of the intracellular balance of NAD and NADP, and is a key enzyme in the biosynthesis of NADP. Catalyzes specifically the phosphorylation on 2'-hydroxyl of the adenosine moiety of NAD to yield NADP. This is NAD kinase from Serratia proteamaculans (strain 568).